The following is a 449-amino-acid chain: Anthocyanidin 3-O-glucosyltransferase 1 (449 aa).

The active-site Proton acceptor is histidine 3. An anthocyanidin is bound at residue histidine 3. The active-site Charge relay is aspartate 103. UDP-alpha-D-glucose-binding residues include threonine 125, alanine 325, glutamine 327, histidine 342, tryptophan 345, asparagine 346, serine 347, and glutamate 350. Alanine 365 provides a ligand contact to an anthocyanidin. UDP-alpha-D-glucose-binding residues include glutamate 366 and glutamine 367.

The protein belongs to the UDP-glycosyltransferase family. In terms of tissue distribution, expressed in cotyledons and roots, but not in leaves.

It carries out the reaction an anthocyanidin + UDP-alpha-D-glucose + H(+) = an anthocyanidin 3-O-beta-D-glucoside + UDP. It participates in pigment biosynthesis; anthocyanin biosynthesis. In the presence of other necessary color factors, this glycosylation reaction allows the accumulation of anthocyanin pigments. This chain is Anthocyanidin 3-O-glucosyltransferase 1 (GT1), found in Manihot esculenta (Cassava).